Consider the following 334-residue polypeptide: Fructose-1,6-bisphosphatase class 1 (334 aa).

Mg(2+) is bound by residues E90, D113, L115, and D116. Substrate is bound by residues 116 to 119, N209, Y242, and K272; that span reads DGSS. E278 is a Mg(2+) binding site.

The protein belongs to the FBPase class 1 family. Homotetramer. Requires Mg(2+) as cofactor.

It is found in the cytoplasm. The enzyme catalyses beta-D-fructose 1,6-bisphosphate + H2O = beta-D-fructose 6-phosphate + phosphate. Its pathway is carbohydrate biosynthesis; gluconeogenesis. In Actinobacillus succinogenes (strain ATCC 55618 / DSM 22257 / CCUG 43843 / 130Z), this protein is Fructose-1,6-bisphosphatase class 1.